A 130-amino-acid chain; its full sequence is Sec-independent protein translocase protein TatB (130 aa).

The helical transmembrane segment at Phe-2–Gly-22 threads the bilayer. The interval Asp-108–Thr-130 is disordered.

The protein belongs to the TatB family. In terms of assembly, the Tat system comprises two distinct complexes: a TatABC complex, containing multiple copies of TatA, TatB and TatC subunits, and a separate TatA complex, containing only TatA subunits. Substrates initially bind to the TatABC complex, which probably triggers association of the separate TatA complex to form the active translocon.

It is found in the cell membrane. In terms of biological role, part of the twin-arginine translocation (Tat) system that transports large folded proteins containing a characteristic twin-arginine motif in their signal peptide across membranes. Together with TatC, TatB is part of a receptor directly interacting with Tat signal peptides. TatB may form an oligomeric binding site that transiently accommodates folded Tat precursor proteins before their translocation. In Mycobacterium ulcerans (strain Agy99), this protein is Sec-independent protein translocase protein TatB.